We begin with the raw amino-acid sequence, 457 residues long: Gustatory and odorant receptor 24 (457 aa).

The Cytoplasmic segment spans residues 1–115 (MSLYFNADTM…GGTAFVLASP (115 aa)). A helical transmembrane segment spans residues 116 to 136 (SMTYCVLFFLLLTVYIAFILL). Topologically, residues 137 to 152 (NRIEIVRTLEGRFEES) are extracellular. Residues 153–173 (VIAYLFIVNILPILIIPLMWY) traverse the membrane as a helical segment. Residues 174-209 (ESRKVVSVVNGWVDFETVYRETTGRALELRLRTKAQ) lie on the Cytoplasmic side of the membrane. Residues 210 to 230 (VIAILLPILCSLSVAITHVTM) form a helical membrane-spanning segment. Topologically, residues 231–237 (VDFKLLQ) are extracellular. A helical membrane pass occupies residues 238 to 258 (VIPYCVLDTITYMMGGYWYMA). Over 259–309 (CETLSITAKILAEDFQRALRHVGPAAKVSEYRSLWLRLSKLARDTGFSTCY) the chain is Cytoplasmic. Residues 310 to 330 (TFTFICLYLFFIITLSIYGLM) traverse the membrane as a helical segment. Over 331–341 (SQISDGFGVKD) the chain is Extracellular. A helical transmembrane segment spans residues 342–362 (IGLAVTAFCSVGLLFYICDEA). The Cytoplasmic segment spans residues 363 to 421 (HYASFNVRTNFQKKLLMVELSWMNTDAQTEINMFLRATEMNPSSINLGGFFDVNRTLFK). Residues 422–442 (SLLATMVTYLVVLLQFQISIP) form a helical membrane-spanning segment. At 443-457 (DEPSAMLMHSNSSHS) the chain is on the extracellular side. Asparagine 453 carries N-linked (GlcNAc...) asparagine glycosylation.

The protein belongs to the insect chemoreceptor superfamily. Gustatory receptor (GR) family. Gr21a subfamily. Carbon dioxide-responsive neurons coexpress GPRgr22 and GPRgr24 in the maxillary palp, at both larval and adult life stages.

Its subcellular location is the cell membrane. Its function is as follows. Gustatory receptor which mediates acceptance or avoidance behavior, depending on its substrates. GPRgr22 and GPRgr24 together are sufficient for olfactory carbon dioxide-chemosensation. This chain is Gustatory and odorant receptor 24, found in Anopheles gambiae (African malaria mosquito).